We begin with the raw amino-acid sequence, 344 residues long: Heat-inducible transcription repressor HrcA (344 aa).

The protein belongs to the HrcA family.

In terms of biological role, negative regulator of class I heat shock genes (grpE-dnaK-dnaJ and groELS operons). Prevents heat-shock induction of these operons. This is Heat-inducible transcription repressor HrcA from Streptococcus agalactiae serotype Ia (strain ATCC 27591 / A909 / CDC SS700).